Reading from the N-terminus, the 332-residue chain is L-lactate dehydrogenase A chain (332 aa).

NAD(+) is bound by residues 29-57 and Arg99; that span reads GAVG…VEDK. Residues Arg106, Asn138, and Arg169 each contribute to the substrate site. Residue Asn138 coordinates NAD(+). His193 acts as the Proton acceptor in catalysis. Thr248 contacts substrate.

It belongs to the LDH/MDH superfamily. LDH family. Homotetramer.

It is found in the cytoplasm. It catalyses the reaction (S)-lactate + NAD(+) = pyruvate + NADH + H(+). Its pathway is fermentation; pyruvate fermentation to lactate; (S)-lactate from pyruvate: step 1/1. Interconverts simultaneously and stereospecifically pyruvate and lactate with concomitant interconversion of NADH and NAD(+). This chain is L-lactate dehydrogenase A chain (LDHA), found in Python regius (Ball python).